We begin with the raw amino-acid sequence, 448 residues long: D-inositol 3-phosphate glycosyltransferase (448 aa).

1D-myo-inositol 3-phosphate-binding positions include His35, 46–51, Lys104, Tyr137, Thr161, and Arg181; that span reads DAGGLN. Gly49 lines the UDP-N-acetyl-alpha-D-glucosamine pocket. UDP-N-acetyl-alpha-D-glucosamine-binding residues include Arg255, Lys260, and Met321. Mg(2+)-binding residues include Tyr330, Arg331, and Ala333. Positions 343 and 351 each coordinate UDP-N-acetyl-alpha-D-glucosamine. A Mg(2+)-binding site is contributed by Thr357.

Belongs to the glycosyltransferase group 1 family. MshA subfamily. Homodimer.

It carries out the reaction 1D-myo-inositol 3-phosphate + UDP-N-acetyl-alpha-D-glucosamine = 1D-myo-inositol 2-acetamido-2-deoxy-alpha-D-glucopyranoside 3-phosphate + UDP + H(+). Its function is as follows. Catalyzes the transfer of a N-acetyl-glucosamine moiety to 1D-myo-inositol 3-phosphate to produce 1D-myo-inositol 2-acetamido-2-deoxy-glucopyranoside 3-phosphate in the mycothiol biosynthesis pathway. The sequence is that of D-inositol 3-phosphate glycosyltransferase from Acidothermus cellulolyticus (strain ATCC 43068 / DSM 8971 / 11B).